The chain runs to 745 residues: AP-3 complex subunit beta (745 aa).

Phosphoserine is present on Ser638. A disordered region spans residues 674 to 745 (YASETSESSE…TEPEPNYWQS (72 aa)). The segment covering 680–718 (ESSEGEYETSTSESEDEETDDTSQEEDNEKNSTPDEDTE) has biased composition (acidic residues).

The protein belongs to the adaptor complexes large subunit family. In terms of assembly, adaptor protein complex 3 (AP-3) is a heterotetramer composed of 2 large adaptins (apl5 and apl6), a medium adaptin (apm3) and a small adaptin (aps3).

Its subcellular location is the golgi apparatus. The protein localises to the cytoplasmic vesicle. It localises to the clathrin-coated vesicle membrane. Functionally, adaptins are components of the adaptor complexes which link clathrin to receptors in coated vesicles. Clathrin-associated protein complexes are believed to interact with the cytoplasmic tails of membrane proteins, leading to their selection and concentration. Beta adaptin is a subunit of the plasma membrane adaptor. The polypeptide is AP-3 complex subunit beta (apl6) (Schizosaccharomyces pombe (strain 972 / ATCC 24843) (Fission yeast)).